Consider the following 394-residue polypeptide: Phosphoglycerate kinase (394 aa).

Residues 21–23 (DFN), arginine 37, 60–63 (HLGR), arginine 119, and arginine 152 contribute to the substrate site. ATP contacts are provided by residues lysine 202, glutamate 324, and 350–353 (GGDS).

This sequence belongs to the phosphoglycerate kinase family. Monomer.

The protein localises to the cytoplasm. It catalyses the reaction (2R)-3-phosphoglycerate + ATP = (2R)-3-phospho-glyceroyl phosphate + ADP. It participates in carbohydrate degradation; glycolysis; pyruvate from D-glyceraldehyde 3-phosphate: step 2/5. This is Phosphoglycerate kinase from Herpetosiphon aurantiacus (strain ATCC 23779 / DSM 785 / 114-95).